We begin with the raw amino-acid sequence, 820 residues long: Protein phosphatase 1 regulatory subunit 29 (820 aa).

Residues 1–22 (MLRLGLCAAALLCVCRPGAVRA) form the signal peptide. Residues 23–397 (DCWLIEGDKG…APSTSTTTHY (375 aa)) lie on the Extracellular side of the membrane. A glycan (N-linked (GlcNAc...) asparagine) is linked at asparagine 54. LRR repeat units follow at residues 56 to 77 (TVHD…SLNR), 80 to 101 (NLTD…AFLG), 104 to 125 (SLQV…MLRG), 128 to 149 (RLQF…AFSE), and 152 to 173 (SLIS…TFAS). N-linked (GlcNAc...) asparagine glycosylation is found at asparagine 80, asparagine 85, and asparagine 117. In terms of domain architecture, LRRCT spans 185–247 (NPFNCECDLF…ITVLQAKCRN (63 aa)). Residues asparagine 205 and asparagine 247 are each glycosylated (N-linked (GlcNAc...) asparagine). The disordered stretch occupies residues 250–294 (LPARPVSHPTPYSTDAQREPDENSGFNPDEILSVEPPASSTTDAS). The region spanning 292-379 (DASAGPAIKL…FNHTCLTFTT (88 aa)) is the Fibronectin type-III domain. The chain crosses the membrane as a helical span at residues 398–418 (IMTILGCLFGMVIVLGAVYYC). Over 419 to 820 (LRKRRMQEEK…WKGVSAQQKL (402 aa)) the chain is Cytoplasmic. 2 disordered regions span residues 508–527 (GAGG…LENG) and 589–612 (SATG…SSHH). Residues serine 619, serine 668, and serine 672 each carry the phosphoserine modification. Positions 654 to 677 (TGLAKGDSKYIEKGSPLNSPLDRL) are disordered.

Interacts with PPP1CA.

It localises to the membrane. Inhibits phosphatase activity of protein phosphatase 1 (PP1) complexes. This Homo sapiens (Human) protein is Protein phosphatase 1 regulatory subunit 29 (ELFN2).